The primary structure comprises 409 residues: Phosphoglycerate kinase (409 aa).

Residues 23-25 (DIN), 63-66 (HQSR), arginine 120, and arginine 160 each bind substrate. ATP-binding positions include glutamate 333 and 359–362 (GGHL).

The protein belongs to the phosphoglycerate kinase family. As to quaternary structure, monomer.

The protein localises to the cytoplasm. The catalysed reaction is (2R)-3-phosphoglycerate + ATP = (2R)-3-phospho-glyceroyl phosphate + ADP. The protein operates within carbohydrate degradation; glycolysis; pyruvate from D-glyceraldehyde 3-phosphate: step 2/5. In Methanobacterium bryantii, this protein is Phosphoglycerate kinase (pgk).